The sequence spans 348 residues: MEENKQKALSAALSQIERQFGKGSVMRMGDSTVSRDIEAISTGSLGLDIALGIGGLPKGRIVEIYGPESSGKTTLTLQVIAECQKMGGTAAFIDAEHALDPSYAQKLGVKVDELLVSQPDTGEQALEITDMLVRSAAVDVVIIDSVAALTPKAEIEGEMGDSHVGLQARLMSQALRKLTANIKRSNTLVIFINQIRMKIGVMFGSPETTTGGNALKFYASVRLDIRRIGSIKKGEEILGSETRVKVVKNKVAPPFKMTEFDILYNEGISRESEIINLGVQLNLIEKSGAWYSYKQEKIGQGKENVRLYLKENPQVAAELEQQIRTELLEKKLSVLASASEDLFETIDD.

66-73 (GPESSGKT) contributes to the ATP binding site.

This sequence belongs to the RecA family.

The protein resides in the cytoplasm. In terms of biological role, can catalyze the hydrolysis of ATP in the presence of single-stranded DNA, the ATP-dependent uptake of single-stranded DNA by duplex DNA, and the ATP-dependent hybridization of homologous single-stranded DNAs. It interacts with LexA causing its activation and leading to its autocatalytic cleavage. The polypeptide is Protein RecA (Legionella pneumophila (strain Lens)).